Reading from the N-terminus, the 265-residue chain is NAD kinase 1 (265 aa).

D45 (proton acceptor) is an active-site residue. NAD(+) contacts are provided by residues 45 to 46, H50, 122 to 123, R148, D150, and A185; these read DG and NE.

The protein belongs to the NAD kinase family. A divalent metal cation is required as a cofactor.

The protein resides in the cytoplasm. The catalysed reaction is NAD(+) + ATP = ADP + NADP(+) + H(+). In terms of biological role, involved in the regulation of the intracellular balance of NAD and NADP, and is a key enzyme in the biosynthesis of NADP. Catalyzes specifically the phosphorylation on 2'-hydroxyl of the adenosine moiety of NAD to yield NADP. The sequence is that of NAD kinase 1 from Halalkalibacterium halodurans (strain ATCC BAA-125 / DSM 18197 / FERM 7344 / JCM 9153 / C-125) (Bacillus halodurans).